Reading from the N-terminus, the 187-residue chain is Cytochrome b-245 chaperone 1 (187 aa).

The chain crosses the membrane as a helical span at residues 20 to 42; the sequence is GIRSWSLLVGILSTGLAAAYYSG. Positions 167-187 are disordered; it reads ESPSERSQSSDSEPDGPGGQS. Phosphoserine occurs at positions 168 and 170.

This sequence belongs to the CYBC1 family. As to quaternary structure, interacts with CYBB; CYBC1 may act as a chaperone stabilizing Cytochrome b-245 heterodimer.

The protein resides in the endoplasmic reticulum membrane. In terms of biological role, functions as a chaperone necessary for a stable expression of the CYBA and CYBB subunits of the cytochrome b-245 heterodimer. Controls the phagocyte respiratory burst and is essential for innate immunity. The protein is Cytochrome b-245 chaperone 1 of Mus musculus (Mouse).